Reading from the N-terminus, the 357-residue chain is Phosphoribosylformylglycinamidine cyclo-ligase (357 aa).

This sequence belongs to the AIR synthase family.

The protein resides in the cytoplasm. The catalysed reaction is 2-formamido-N(1)-(5-O-phospho-beta-D-ribosyl)acetamidine + ATP = 5-amino-1-(5-phospho-beta-D-ribosyl)imidazole + ADP + phosphate + H(+). Its pathway is purine metabolism; IMP biosynthesis via de novo pathway; 5-amino-1-(5-phospho-D-ribosyl)imidazole from N(2)-formyl-N(1)-(5-phospho-D-ribosyl)glycinamide: step 2/2. This is Phosphoribosylformylglycinamidine cyclo-ligase from Rhodopseudomonas palustris (strain ATCC BAA-98 / CGA009).